We begin with the raw amino-acid sequence, 353 residues long: Photosystem II D2 protein (353 aa).

An N-acetylthreonine modification is found at Thr-2. Phosphothreonine is present on Thr-2. A helical transmembrane segment spans residues 41 to 61 (CAYFALGGWFTGTTFVTSWYT). His-118 lines the chlorophyll a pocket. A helical transmembrane segment spans residues 125–141 (GFMLRQFELARSVQLRP). 2 residues coordinate pheophytin a: Gln-130 and Asn-143. A helical transmembrane segment spans residues 153–166 (VFVSVFLIYPLGQS). His-198 provides a ligand contact to chlorophyll a. A helical membrane pass occupies residues 208-228 (AALLCAIHGATVENTLFEDGD). Positions 215 and 262 each coordinate a plastoquinone. Position 215 (His-215) interacts with Fe cation. His-269 serves as a coordination point for Fe cation. A helical transmembrane segment spans residues 279–295 (GLWMSAIGVVGLALNLR).

This sequence belongs to the reaction center PufL/M/PsbA/D family. In terms of assembly, PSII is composed of 1 copy each of membrane proteins PsbA, PsbB, PsbC, PsbD, PsbE, PsbF, PsbH, PsbI, PsbJ, PsbK, PsbL, PsbM, PsbT, PsbX, PsbY, PsbZ, Psb30/Ycf12, at least 3 peripheral proteins of the oxygen-evolving complex and a large number of cofactors. It forms dimeric complexes. The D1/D2 heterodimer binds P680, chlorophylls that are the primary electron donor of PSII, and subsequent electron acceptors. It shares a non-heme iron and each subunit binds pheophytin, quinone, additional chlorophylls, carotenoids and lipids. There is also a Cl(-1) ion associated with D1 and D2, which is required for oxygen evolution. The PSII complex binds additional chlorophylls, carotenoids and specific lipids. is required as a cofactor.

The protein localises to the plastid. It localises to the chloroplast thylakoid membrane. The catalysed reaction is 2 a plastoquinone + 4 hnu + 2 H2O = 2 a plastoquinol + O2. In terms of biological role, photosystem II (PSII) is a light-driven water:plastoquinone oxidoreductase that uses light energy to abstract electrons from H(2)O, generating O(2) and a proton gradient subsequently used for ATP formation. It consists of a core antenna complex that captures photons, and an electron transfer chain that converts photonic excitation into a charge separation. The D1/D2 (PsbA/PsbD) reaction center heterodimer binds P680, the primary electron donor of PSII as well as several subsequent electron acceptors. D2 is needed for assembly of a stable PSII complex. The polypeptide is Photosystem II D2 protein (Lolium perenne (Perennial ryegrass)).